We begin with the raw amino-acid sequence, 479 residues long: MAWNTNLRWRLPLTCLLLQVVMVILFGVFVRYDFEADAHWWSERTHKNLSDVENEFYYRYPSFQDVHVMVFVGFGFLMTFLQRYGFSAVGFNFLLAAFGIQWALLMQGWFHFLQGRYIVVGVENLINADFCVASVCVAFGAVLGKVSPIQLLIMTFFQVTLFAVNEFILLNLLKVKDAGGSMTIHTFGAYFGLTVTRILYRRNLEQSKERQNSVYQSDLFAMIGTLFLWMYWPSFNSAISYHGDSQHRAAINTYCSLAACVLTSVAISSALHKKGKLDMVHIQNATLAGGVAVGTAAEMMLMPYGALIIGFVCGIISTLGFVYLTPFLESRLHIQDTCGINNLHGIPGIIGGIVGAVTAASASLEVYGKEGLVHSFDFQGFKGDWTARTQGKFQIYGLLVTLAMALMGGIIVGLILRLPFWGQPSDENCFEDAVYWEMPEGNSTVYIPEDPTFKPSGPSVPSVPMVSPLPMASSVPLVP.

The Cytoplasmic segment spans residues 1–9 (MAWNTNLRW). Residues 10–30 (RLPLTCLLLQVVMVILFGVFV) form a helical membrane-spanning segment. Residues 31-60 (RYDFEADAHWWSERTHKNLSDVENEFYYRY) are Extracellular-facing. N-linked (GlcNAc...) asparagine glycosylation occurs at N48. A helical transmembrane segment spans residues 61–81 (PSFQDVHVMVFVGFGFLMTFL). Residues 82 to 85 (QRYG) lie on the Cytoplasmic side of the membrane. A helical membrane pass occupies residues 86–106 (FSAVGFNFLLAAFGIQWALLM). Residues 107–123 (QGWFHFLQGRYIVVGVE) are Extracellular-facing. The chain crosses the membrane as a helical span at residues 124–144 (NLINADFCVASVCVAFGAVLG). The Cytoplasmic portion of the chain corresponds to 145–148 (KVSP). The chain crosses the membrane as a helical span at residues 149 to 169 (IQLLIMTFFQVTLFAVNEFIL). The Extracellular portion of the chain corresponds to 170–177 (LNLLKVKD). Residues 178–200 (AGGSMTIHTFGAYFGLTVTRILY) form a helical membrane-spanning segment. Over 201–218 (RRNLEQSKERQNSVYQSD) the chain is Cytoplasmic. Residues 219 to 239 (LFAMIGTLFLWMYWPSFNSAI) traverse the membrane as a helical segment. Topologically, residues 240–250 (SYHGDSQHRAA) are extracellular. A helical membrane pass occupies residues 251–271 (INTYCSLAACVLTSVAISSAL). The Cytoplasmic portion of the chain corresponds to 272–281 (HKKGKLDMVH). A helical transmembrane segment spans residues 282–302 (IQNATLAGGVAVGTAAEMMLM). Residue P303 is a topological domain, extracellular. Residues 304-324 (YGALIIGFVCGIISTLGFVYL) form a helical membrane-spanning segment. At 325 to 345 (TPFLESRLHIQDTCGINNLHG) the chain is on the cytoplasmic side. A helical membrane pass occupies residues 346-366 (IPGIIGGIVGAVTAASASLEV). The Extracellular portion of the chain corresponds to 367–394 (YGKEGLVHSFDFQGFKGDWTARTQGKFQ). A helical transmembrane segment spans residues 395 to 415 (IYGLLVTLAMALMGGIIVGLI). At 416 to 479 (LRLPFWGQPS…PMASSVPLVP (64 aa)) the chain is on the cytoplasmic side.

It belongs to the ammonium transporter (TC 2.A.49) family. Rh subfamily. As to quaternary structure, homotrimer. Post-translationally, N-glycosylated.

It localises to the cell membrane. The protein localises to the apical cell membrane. It catalyses the reaction NH4(+)(in) = NH4(+)(out). The catalysed reaction is methylamine(out) = methylamine(in). It carries out the reaction CO2(out) = CO2(in). Functionally, ammonium transporter involved in the maintenance of acid-base homeostasis. Transports ammonium and its related derivative methylammonium across the plasma membrane of epithelial cells likely contributing to renal transepithelial ammonia transport and ammonia metabolism. Postulated to primarily mediate an electroneutral bidirectional transport of NH3 ammonia species according to a mechanism that implies interaction of an NH4(+) ion with acidic residues of the pore entry followed by dissociation of NH4(+) into NH3 and H(+). As a result NH3 transits through the central pore and is protonated on the extracellular side reforming NH4(+). May act as a CO2 channel providing for renal acid secretion. This Pan troglodytes (Chimpanzee) protein is Ammonium transporter Rh type C (RHCG).